The following is a 215-amino-acid chain: Oligoribonuclease (215 aa).

Residues 5–170 (LVWIDCEMTG…ADIHESIREL (166 aa)) enclose the Exonuclease domain. Y127 is an active-site residue. Residues 196–215 (LDEGKDAPGPSDSASAPPTG) form a disordered region. Over residues 202–215 (APGPSDSASAPPTG) the composition is skewed to low complexity.

This sequence belongs to the oligoribonuclease family.

It localises to the cytoplasm. Its function is as follows. 3'-to-5' exoribonuclease specific for small oligoribonucleotides. The chain is Oligoribonuclease from Mycolicibacterium paratuberculosis (strain ATCC BAA-968 / K-10) (Mycobacterium paratuberculosis).